Here is a 151-residue protein sequence, read N- to C-terminus: MLP-like protein 328 (151 aa).

This sequence belongs to the MLP family.

The polypeptide is MLP-like protein 328 (MLP328) (Arabidopsis thaliana (Mouse-ear cress)).